We begin with the raw amino-acid sequence, 389 residues long: N-terminal EF-hand calcium-binding protein 2 (389 aa).

Arginine 10 carries the post-translational modification Omega-N-methylarginine. Residue arginine 42 is modified to Asymmetric dimethylarginine. EF-hand domains are found at residues 63–98 (GGTA…GVLN) and 99–132 (EKEL…HMGD). Ca(2+)-binding residues include aspartate 76, asparagine 78, aspartate 80, lysine 82, glutamate 87, aspartate 110, aspartate 112, threonine 114, histidine 116, and glutamate 121. The stretch at 173 to 198 (LKETANQIQSLLSSVESAVEAIEEQT) forms a coiled coil. The 89-residue stretch at 289-377 (QLVRQEMAVC…LSQPEALSQI (89 aa)) folds into the ABM domain.

As to quaternary structure, interacts (calcium-dependent) with ADORA2A and GRM5. Expressed in the iris, in the ciliary margin of the retina and in the inner portion of the neural retina. Expressed in the spinal dorsal horn with especially strong expression in lamina IIi; found in excitory synaptic boutons (at protein level).

Its subcellular location is the cytoplasm. It localises to the cell projection. The protein localises to the dendrite. The protein resides in the axon. It is found in the cell membrane. Functionally, may act as a signaling scaffold protein that senses intracellular calcium. Can modulate ligand-induced internalization of ADORA2A and coupling efficiency of mGluR5/GRM5; for both receptors may regulate signaling activity such as promoting MAPK1/3 (ERK1/2) activation. In Mus musculus (Mouse), this protein is N-terminal EF-hand calcium-binding protein 2 (Necab2).